We begin with the raw amino-acid sequence, 174 residues long: 2-hydroxy-palmitic acid dioxygenase MPO1 (174 aa).

Residues 1–23 are Cytoplasmic-facing; that stretch reads MGEGLLDLRSQLGFYKFYHHNPK. Residues 24 to 44 form a helical membrane-spanning segment; it reads NVLIHSIFVPTILFSGSCMLH. Topologically, residues 45 to 63 are lumenal; sequence RVKIYQSISLTAVLSVLFS. A helical membrane pass occupies residues 64 to 84; that stretch reads IFYCLLYLPTGLLAGVLLLLL. At 85–98 the chain is on the cytoplasmic side; that stretch reads NLALIDHRVDLTFK. A helical transmembrane segment spans residues 99 to 119; that stretch reads QELGLFTIGWIFQFVGHGVFE. The Lumenal segment spans residues 120 to 131; sequence KRRPALIDNLVQ. Residues 132–152 form a helical membrane-spanning segment; the sequence is SLVLAPYFIMFEFLFKLGFMP. At 153 to 174 the chain is on the cytoplasmic side; the sequence is RLKATLEHDLEIKQRNLRMQRQ.

Belongs to the MPO1 family. Fe(2+) serves as cofactor.

Its subcellular location is the endoplasmic reticulum membrane. It catalyses the reaction (R)-2-hydroxyhexadecanoate + O2 = pentadecanoate + CO2 + H2O. Functionally, dioxygenase that catalyzes the alpha-oxidation of 2-hydroxy fatty acids in an iron-dependent manner. Involved in metabolism of phytosphingosine and is required for proper endoplasmic reticulum stress response. This is 2-hydroxy-palmitic acid dioxygenase MPO1 from Saccharomyces cerevisiae (strain ATCC 204508 / S288c) (Baker's yeast).